A 241-amino-acid chain; its full sequence is uncharacterized protein (241 aa).

It belongs to the AB hydrolase superfamily. AB hydrolase 2 family.

This is an uncharacterized protein from Schizosaccharomyces pombe (strain 972 / ATCC 24843) (Fission yeast).